Here is a 575-residue protein sequence, read N- to C-terminus: Arginine--tRNA ligase (575 aa).

The short motif at 131 to 141 (ANPNGPLHIGH) is the 'HIGH' region element.

This sequence belongs to the class-I aminoacyl-tRNA synthetase family.

It localises to the cytoplasm. The enzyme catalyses tRNA(Arg) + L-arginine + ATP = L-arginyl-tRNA(Arg) + AMP + diphosphate. In Methanobrevibacter smithii (strain ATCC 35061 / DSM 861 / OCM 144 / PS), this protein is Arginine--tRNA ligase.